Reading from the N-terminus, the 698-residue chain is Zinc finger CCCH domain-containing protein 7 (698 aa).

Pro residues predominate over residues 1–11; the sequence is MEEPSPVPPAA. 4 disordered regions span residues 1-23, 56-95, 109-137, and 272-300; these read MEEP…PPTT, HAAR…GGDR, APHE…PQGT, and GSLD…SGNS. Low complexity-rich tracts occupy residues 12-21 and 65-74; these read APASLAAAPP and EPAAAAAIPP. Acidic residues predominate over residues 281-300; sequence EEGEIEGDTQNLDADDSGNS. C3H1-type zinc fingers lie at residues 429–456, 458–485, and 486–511; these read PKVV…HDTT, LTKS…HELS, and KYPC…HVIP. 2 disordered regions span residues 512–553 and 607–682; these read TAEG…GEPA and TEKH…QHEV. Polar residues-rich tracts occupy residues 535–548 and 665–680; these read CQEQ…STVY and SLPT…STQH.

This chain is Zinc finger CCCH domain-containing protein 7, found in Oryza sativa subsp. japonica (Rice).